We begin with the raw amino-acid sequence, 211 residues long: Thiamine-phosphate synthase (211 aa).

4-amino-2-methyl-5-(diphosphooxymethyl)pyrimidine-binding positions include 37 to 41 (QLRIK) and N69. 2 residues coordinate Mg(2+): D70 and D89. Position 108 (S108) interacts with 4-amino-2-methyl-5-(diphosphooxymethyl)pyrimidine. A 2-[(2R,5Z)-2-carboxy-4-methylthiazol-5(2H)-ylidene]ethyl phosphate-binding site is contributed by 134–136 (TQT). K137 provides a ligand contact to 4-amino-2-methyl-5-(diphosphooxymethyl)pyrimidine. 2-[(2R,5Z)-2-carboxy-4-methylthiazol-5(2H)-ylidene]ethyl phosphate is bound by residues G166 and 186 to 187 (VS).

It belongs to the thiamine-phosphate synthase family. The cofactor is Mg(2+).

The enzyme catalyses 2-[(2R,5Z)-2-carboxy-4-methylthiazol-5(2H)-ylidene]ethyl phosphate + 4-amino-2-methyl-5-(diphosphooxymethyl)pyrimidine + 2 H(+) = thiamine phosphate + CO2 + diphosphate. The catalysed reaction is 2-(2-carboxy-4-methylthiazol-5-yl)ethyl phosphate + 4-amino-2-methyl-5-(diphosphooxymethyl)pyrimidine + 2 H(+) = thiamine phosphate + CO2 + diphosphate. It carries out the reaction 4-methyl-5-(2-phosphooxyethyl)-thiazole + 4-amino-2-methyl-5-(diphosphooxymethyl)pyrimidine + H(+) = thiamine phosphate + diphosphate. Its pathway is cofactor biosynthesis; thiamine diphosphate biosynthesis; thiamine phosphate from 4-amino-2-methyl-5-diphosphomethylpyrimidine and 4-methyl-5-(2-phosphoethyl)-thiazole: step 1/1. Condenses 4-methyl-5-(beta-hydroxyethyl)thiazole monophosphate (THZ-P) and 2-methyl-4-amino-5-hydroxymethyl pyrimidine pyrophosphate (HMP-PP) to form thiamine monophosphate (TMP). This Citrobacter koseri (strain ATCC BAA-895 / CDC 4225-83 / SGSC4696) protein is Thiamine-phosphate synthase.